The following is a 186-amino-acid chain: Ribosome-recycling factor (186 aa).

The protein belongs to the RRF family.

The protein localises to the cytoplasm. In terms of biological role, responsible for the release of ribosomes from messenger RNA at the termination of protein biosynthesis. May increase the efficiency of translation by recycling ribosomes from one round of translation to another. The protein is Ribosome-recycling factor of Paracidovorax citrulli (strain AAC00-1) (Acidovorax citrulli).